Here is a 1505-residue protein sequence, read N- to C-terminus: Homeobox protein cut-like 1 (1505 aa).

A coiled-coil region spans residues 56 to 407 (LLKSFQGEID…ALRISNSDLS (352 aa)). Polar residues-rich tracts occupy residues 396–407 (NAALRISNSDLS) and 440–451 (EQASNTNGTHQF). Disordered stretches follow at residues 396–455 (NAAL…SPAG), 512–552 (YSTN…EEMD), 646–669 (PKRR…GSDE), and 682–704 (LQVQ…NSDD). Over residues 516–546 (SISSQSPLQQSPDVNGMAPSPSQSESAGSVS) the composition is skewed to low complexity. Glu540 is modified (phosphoserine). The segment at residues 542-629 (AGSVSEGEEM…ILALRSIQGR (88 aa)) is a DNA-binding region (CUT 1). Low complexity predominate over residues 694–703 (SSASGSGNSD). Ser763 bears the Phosphoserine mark. The interval 768-802 (SAAPEAGASALPNPPALKKEAQDAPGLDPQGAADC) is disordered. Residues Lys785, Lys811, and Lys842 each participate in a glycyl lysine isopeptide (Lys-Gly) (interchain with G-Cter in SUMO2) cross-link. Basic and acidic residues predominate over residues 815-853 (GRSGAWKDHWWSAVQPERRNAASSEEAKAEETGGGKEKG). A disordered region spans residues 815-930 (GRSGAWKDHW…KPTKPSVPPL (116 aa)). Polar residues-rich tracts occupy residues 868-877 (SQLQGPSSSE) and 887-911 (SPYS…NSPL). Ser909 is modified (phosphoserine). Residues 934–1021 (QYEVYMYQEV…QGVLPVQGQQ (88 aa)) constitute a DNA-binding region (CUT 2). Over residues 1036 to 1049 (LQQGCVSSESTPKT) the composition is skewed to polar residues. A disordered region spans residues 1036–1110 (LQQGCVSSES…QPTTPLPLSG (75 aa)). A compositionally biased stretch (low complexity) spans 1050–1066 (SASCSPAPESPMSSSES). Ser1059 and Ser1069 each carry phosphoserine. Residues 1117 to 1204 (QELVAMSPEL…VEKLMDMKRM (88 aa)) constitute a DNA-binding region (CUT 3). The tract at residues 1210–1247 (MKRRHSSVSDSQPCEPPSVGTEYSQGASPQPQHQLKKP) is disordered. The span at 1230–1242 (TEYSQGASPQPQH) shows a compositional bias: polar residues. The homeobox DNA-binding region spans 1244 to 1303 (LKKPRVVLAPEEKEALKRAYQQKPYPSPKTIEDLATQLNLKTSTVINWFHNYRSRIRREL). Ser1270 is modified (phosphoserine). Lys1284 is covalently cross-linked (Glycyl lysine isopeptide (Lys-Gly) (interchain with G-Cter in SUMO2)). Residues 1312-1480 (SQGQAGASDS…SRDNPLRKKK (169 aa)) are disordered. The span at 1316–1333 (AGASDSPSARSGRAAPSS) shows a compositional bias: low complexity. Residue Ser1337 is modified to Phosphoserine. Composition is skewed to basic and acidic residues over residues 1353-1368 (EEPK…EVPR) and 1384-1394 (DDARDDDHEGG). 2 stretches are compositionally biased toward low complexity: residues 1405–1436 (PASA…AAPS) and 1443–1455 (NSSS…RPSS). Position 1455 is a phosphoserine (Ser1455). Residues 1467–1476 (GARDSRDNPL) show a composition bias toward basic and acidic residues. Phosphoserine occurs at positions 1486 and 1496.

This sequence belongs to the CUT homeobox family. As to quaternary structure, interacts with BANP. Interacts with SATB1 (via DNA-binding domains); the interaction inhibits the attachment of both proteins to DNA. Post-translationally, phosphorylated by PKA. As cells progress into S phase, a fraction of CUX1 molecules is proteolytically processed into N-terminally truncated proteins of 110 kDa by CTSL. Cell cycle-dependent processing of CUX1 serves to generate a CDP/Cux p110 with distinct DNA binding and transcriptional properties.

It localises to the nucleus. Transcription factor involved in the control of neuronal differentiation in the brain. Regulates dendrite development and branching, and dendritic spine formation in cortical layers II-III. Also involved in the control of synaptogenesis. In addition, it has probably a broad role in mammalian development as a repressor of developmentally regulated gene expression. May act by preventing binding of positively-activing CCAAT factors to promoters. Component of nf-munr repressor; binds to the matrix attachment regions (MARs) (5' and 3') of the immunoglobulin heavy chain enhancer. Represses T-cell receptor (TCR) beta enhancer function by binding to MARbeta, an ATC-rich DNA sequence located upstream of the TCR beta enhancer. Binds to the TH enhancer; may require the basic helix-loop-helix protein TCF4 as a coactivator. Its function is as follows. Plays a role in cell cycle progression, in particular at the G1/S transition. As cells progress into S phase, a fraction of CUX1 molecules is proteolytically processed into N-terminally truncated proteins of 110 kDa. While CUX1 only transiently binds to DNA and carries the CCAAT-displacement activity, CDP/Cux p110 makes a stable interaction with DNA and stimulates expression of genes such as POLA1. The chain is Homeobox protein cut-like 1 from Homo sapiens (Human).